The following is a 157-amino-acid chain: Serine-protein kinase RsbW (157 aa).

This sequence belongs to the anti-sigma-factor family.

It carries out the reaction L-seryl-[protein] + ATP = O-phospho-L-seryl-[protein] + ADP + H(+). It catalyses the reaction L-threonyl-[protein] + ATP = O-phospho-L-threonyl-[protein] + ADP + H(+). Its function is as follows. Negative regulator of sigma-B activity. Phosphorylates and inactivates its specific antagonist protein, RsbV. Upon phosphorylation of RsbV, RsbW is released and binds to sigma-B, thereby blocking its ability to form an RNA polymerase holoenzyme (E-sigma-B). The sequence is that of Serine-protein kinase RsbW from Listeria innocua serovar 6a (strain ATCC BAA-680 / CLIP 11262).